The chain runs to 577 residues: Pyruvate decarboxylase (577 aa).

Positions 30 and 116 each coordinate substrate. The interval 388–482 (TPGYGVNDFI…FLINNDGYTI (95 aa)) is thiamine pyrophosphate binding. Residues Asp-450, Asn-477, and Gly-479 each contribute to the Mg(2+) site. Glu-483 provides a ligand contact to substrate.

This sequence belongs to the TPP enzyme family. In terms of assembly, homotetramer. It depends on a metal cation as a cofactor. Thiamine diphosphate serves as cofactor.

The enzyme catalyses a 2-oxocarboxylate + H(+) = an aldehyde + CO2. The polypeptide is Pyruvate decarboxylase (pdcA) (Aspergillus parasiticus).